We begin with the raw amino-acid sequence, 204 residues long: UPF0637 protein Lm4b_01081 (204 aa).

It belongs to the UPF0637 family.

The protein is UPF0637 protein Lm4b_01081 of Listeria monocytogenes serotype 4b (strain CLIP80459).